Consider the following 131-residue polypeptide: Large ribosomal subunit protein bL17 (131 aa).

Belongs to the bacterial ribosomal protein bL17 family. In terms of assembly, part of the 50S ribosomal subunit. Contacts protein L32.

The chain is Large ribosomal subunit protein bL17 from Shewanella violacea (strain JCM 10179 / CIP 106290 / LMG 19151 / DSS12).